Consider the following 204-residue polypeptide: Cytochrome c biogenesis ATP-binding export protein CcmA (204 aa).

In terms of domain architecture, ABC transporter spans 2–202; the sequence is LEIRNVTCIR…DSNELKKIRL (201 aa). 34–41 contributes to the ATP binding site; sequence GQNGAGKT.

It belongs to the ABC transporter superfamily. CcmA exporter (TC 3.A.1.107) family. The complex is composed of two ATP-binding proteins (CcmA) and two transmembrane proteins (CcmB).

Its subcellular location is the cell inner membrane. It carries out the reaction heme b(in) + ATP + H2O = heme b(out) + ADP + phosphate + H(+). In terms of biological role, part of the ABC transporter complex CcmAB involved in the biogenesis of c-type cytochromes; once thought to export heme, this seems not to be the case, but its exact role is uncertain. Responsible for energy coupling to the transport system. This chain is Cytochrome c biogenesis ATP-binding export protein CcmA, found in Aliivibrio fischeri (strain ATCC 700601 / ES114) (Vibrio fischeri).